Consider the following 130-residue polypeptide: Small ribosomal subunit protein eS6 (130 aa).

The protein belongs to the eukaryotic ribosomal protein eS6 family.

The chain is Small ribosomal subunit protein eS6 from Methanosphaera stadtmanae (strain ATCC 43021 / DSM 3091 / JCM 11832 / MCB-3).